We begin with the raw amino-acid sequence, 511 residues long: D-alanine--D-alanyl carrier protein ligase (511 aa).

Position 152 to 153 (152 to 153 (TS)) interacts with ATP. D-alanine is bound at residue aspartate 199. An ATP-binding site is contributed by 294 to 299 (NAYGPT). Residue valine 303 coordinates D-alanine. ATP contacts are provided by residues aspartate 385, 397–400 (YGGR), and lysine 499. Lysine 499 is a D-alanine binding site.

Belongs to the ATP-dependent AMP-binding enzyme family. DltA subfamily.

The protein localises to the cytoplasm. The enzyme catalyses holo-[D-alanyl-carrier protein] + D-alanine + ATP = D-alanyl-[D-alanyl-carrier protein] + AMP + diphosphate. It functions in the pathway cell wall biogenesis; lipoteichoic acid biosynthesis. Functionally, catalyzes the first step in the D-alanylation of lipoteichoic acid (LTA), the activation of D-alanine and its transfer onto the D-alanyl carrier protein (Dcp) DltC. In an ATP-dependent two-step reaction, forms a high energy D-alanyl-AMP intermediate, followed by transfer of the D-alanyl residue as a thiol ester to the phosphopantheinyl prosthetic group of the Dcp. D-alanylation of LTA plays an important role in modulating the properties of the cell wall in Gram-positive bacteria, influencing the net charge of the cell wall. The protein is D-alanine--D-alanyl carrier protein ligase of Streptococcus agalactiae serotype V (strain ATCC BAA-611 / 2603 V/R).